The chain runs to 229 residues: Large ribosomal subunit protein uL1 (229 aa).

Belongs to the universal ribosomal protein uL1 family. Part of the 50S ribosomal subunit.

In terms of biological role, binds directly to 23S rRNA. The L1 stalk is quite mobile in the ribosome, and is involved in E site tRNA release. Functionally, protein L1 is also a translational repressor protein, it controls the translation of the L11 operon by binding to its mRNA. This is Large ribosomal subunit protein uL1 from Staphylococcus aureus (strain MRSA252).